The primary structure comprises 122 residues: Probable non-specific lipid-transfer protein 3 (122 aa).

Positions 1 to 29 (MARLNSKAVAAAVVLAAVVLMMAGREASA) are cleaved as a signal peptide. Disulfide bonds link cysteine 33–cysteine 81, cysteine 43–cysteine 58, cysteine 59–cysteine 104, and cysteine 79–cysteine 118.

Belongs to the plant LTP family. As to expression, expressed in phloem. Also detected in the epidermis near the vascular tissues in resistant plants infected by Hessian fly larvae.

Plant non-specific lipid-transfer proteins transfer phospholipids as well as galactolipids across membranes. May play a role in wax or cutin deposition in the cell walls of expanding epidermal cells and certain secretory tissues. The chain is Probable non-specific lipid-transfer protein 3 (LTP3) from Triticum aestivum (Wheat).